The sequence spans 359 residues: Histidinol-phosphate aminotransferase (359 aa).

The residue at position 220 (Lys220) is an N6-(pyridoxal phosphate)lysine.

Belongs to the class-II pyridoxal-phosphate-dependent aminotransferase family. Histidinol-phosphate aminotransferase subfamily. In terms of assembly, homodimer. Pyridoxal 5'-phosphate serves as cofactor.

The enzyme catalyses L-histidinol phosphate + 2-oxoglutarate = 3-(imidazol-4-yl)-2-oxopropyl phosphate + L-glutamate. It participates in amino-acid biosynthesis; L-histidine biosynthesis; L-histidine from 5-phospho-alpha-D-ribose 1-diphosphate: step 7/9. This Neisseria gonorrhoeae (strain ATCC 700825 / FA 1090) protein is Histidinol-phosphate aminotransferase.